The following is a 343-amino-acid chain: Protein RecA (343 aa).

64 to 71 (GPESSGKT) is an ATP binding site.

Belongs to the RecA family.

The protein localises to the cytoplasm. In terms of biological role, can catalyze the hydrolysis of ATP in the presence of single-stranded DNA, the ATP-dependent uptake of single-stranded DNA by duplex DNA, and the ATP-dependent hybridization of homologous single-stranded DNAs. It interacts with LexA causing its activation and leading to its autocatalytic cleavage. In Bacillus cereus (strain B4264), this protein is Protein RecA.